The following is a 217-amino-acid chain: MKMSCTIEKALADAKALVERLREHDNAAEALIEQTTALNKRVEAMKQYQEEIQELNEVARHRPRSTLVMGIQQENRQIRELQQENKELRTSLEEHQSALELIMSKYREQMFRLLMASKKDDPSIIMKLKEQHSKELQVHVDQITEMAAVMRKAIEIDDKHGCKEQERIIQLEQENKGLREILQITRESFLNLKKEDASESTSLSGLVTSSDLSLRKS.

2 coiled-coil regions span residues 6 to 106 and 163 to 188; these read TIEK…MSKY and KEQERIIQLEQENKGLREILQITRES. The disordered stretch occupies residues 194-217; the sequence is KEDASESTSLSGLVTSSDLSLRKS. A compositionally biased stretch (polar residues) spans 199-217; sequence ESTSLSGLVTSSDLSLRKS.

It belongs to the SIKE family.

The protein resides in the cytoplasm. The protein is FGFR1 oncogene partner 2 homolog (FGFR1OP2) of Gallus gallus (Chicken).